The primary structure comprises 518 residues: Protein nucleotidyltransferase YdiU (518 aa).

G109, G111, R112, K131, D143, G144, R194, and R201 together coordinate ATP. The active-site Proton acceptor is the D270. Mg(2+)-binding residues include N271 and D280. D280 lines the ATP pocket.

This sequence belongs to the SELO family. Requires Mg(2+) as cofactor. Mn(2+) serves as cofactor.

The catalysed reaction is L-seryl-[protein] + ATP = 3-O-(5'-adenylyl)-L-seryl-[protein] + diphosphate. It catalyses the reaction L-threonyl-[protein] + ATP = 3-O-(5'-adenylyl)-L-threonyl-[protein] + diphosphate. It carries out the reaction L-tyrosyl-[protein] + ATP = O-(5'-adenylyl)-L-tyrosyl-[protein] + diphosphate. The enzyme catalyses L-histidyl-[protein] + UTP = N(tele)-(5'-uridylyl)-L-histidyl-[protein] + diphosphate. The catalysed reaction is L-seryl-[protein] + UTP = O-(5'-uridylyl)-L-seryl-[protein] + diphosphate. It catalyses the reaction L-tyrosyl-[protein] + UTP = O-(5'-uridylyl)-L-tyrosyl-[protein] + diphosphate. In terms of biological role, nucleotidyltransferase involved in the post-translational modification of proteins. It can catalyze the addition of adenosine monophosphate (AMP) or uridine monophosphate (UMP) to a protein, resulting in modifications known as AMPylation and UMPylation. This chain is Protein nucleotidyltransferase YdiU, found in Paraburkholderia xenovorans (strain LB400).